A 707-amino-acid chain; its full sequence is Integrator complex subunit 13 (707 aa).

The segment covering P565–P625 has biased composition (basic and acidic residues). The tract at residues P565–P651 is disordered. Residues E567 to K622 adopt a coiled-coil conformation. Positions K573–E583 match the Nuclear localization signal (NLS) motif. The tract at residues G650–G695 is cleavage module binding motif (CMBM).

Belongs to the Integrator subunit 13 family. Component of the Integrator complex, composed of core subunits INTS1, INTS2, INTS3, INTS4, INTS5, INTS6, INTS7, INTS8, INTS9/RC74, INTS10, INTS11/CPSF3L, INTS12, INTS13, INTS14 and INTS15. The core complex associates with protein phosphatase 2A subunits PPP2CA and PPP2R1A, to form the Integrator-PP2A (INTAC) complex. INTS13 is part of the tail subcomplex, composed of INTS10, INTS13, INTS14 and INTS15.

It localises to the nucleus. Its subcellular location is the cytoplasm. Its function is as follows. Component of the integrator complex, a multiprotein complex that terminates RNA polymerase II (Pol II) transcription in the promoter-proximal region of genes. The integrator complex provides a quality checkpoint during transcription elongation by driving premature transcription termination of transcripts that are unfavorably configured for transcriptional elongation: the complex terminates transcription by (1) catalyzing dephosphorylation of the C-terminal domain (CTD) of Pol II subunit POLR2A/RPB1 and SUPT5H/SPT5, (2) degrading the exiting nascent RNA transcript via endonuclease activity and (3) promoting the release of Pol II from bound DNA. The integrator complex is also involved in terminating the synthesis of non-coding Pol II transcripts, such as enhancer RNAs (eRNAs), small nuclear RNAs (snRNAs), telomerase RNAs and long non-coding RNAs (lncRNAs). Within the integrator complex, INTS13 is part of the integrator tail module and acts as a platform for the recruitment of transcription factors at promoters. The polypeptide is Integrator complex subunit 13 (Xenopus tropicalis (Western clawed frog)).